We begin with the raw amino-acid sequence, 459 residues long: UDP-N-acetylmuramoylalanine--D-glutamate ligase (459 aa).

Position 131–137 (131–137 (GANGKST)) interacts with ATP.

Belongs to the MurCDEF family.

It localises to the cytoplasm. The catalysed reaction is UDP-N-acetyl-alpha-D-muramoyl-L-alanine + D-glutamate + ATP = UDP-N-acetyl-alpha-D-muramoyl-L-alanyl-D-glutamate + ADP + phosphate + H(+). It participates in cell wall biogenesis; peptidoglycan biosynthesis. Functionally, cell wall formation. Catalyzes the addition of glutamate to the nucleotide precursor UDP-N-acetylmuramoyl-L-alanine (UMA). In Methylococcus capsulatus (strain ATCC 33009 / NCIMB 11132 / Bath), this protein is UDP-N-acetylmuramoylalanine--D-glutamate ligase.